Here is a 228-residue protein sequence, read N- to C-terminus: uncharacterized protein (228 aa).

Helical transmembrane passes span His14 to Val34, Val42 to Leu62, Phe130 to Ser150, Phe156 to Met176, and Ile192 to Leu212.

Belongs to the AzlC family.

It localises to the cell membrane. This is an uncharacterized protein from Helicobacter pylori (strain ATCC 700392 / 26695) (Campylobacter pylori).